Here is a 523-residue protein sequence, read N- to C-terminus: MRILSWNVNGIQNPFNYFPWNKKNSYKEIFQELQADVICVQELKMQKDSFPQQYAVVEGFDSYFTFPKIRKGYSGVGFYVKKDVAIPVKAEEGITGILPVRGQKYSYSEAPEHEKIGFFPKDIDRKTANWIDSEGRCILLDFQMFILIGVYCPVNSGENRLEYRRAFYKALRERIERLIKEGNRKIILVGDVNILCNPIDTADQKDIIRESLIPSIMESRQWIRDLLLPSRLGLLLDIGRIQHPTRKGMFTCWNTRLNTRPTNYGTRIDYTLATPDLLPWVQDADIMAEVMGSDHCPVYLDLKEEYEGKKLSNFLSHSKEPPLLSTAHHSAYRPSKNIHSMFQHFNSMKKNKNNSPTQSENVSASASSGSSPTVSRANSVIDVDAYPPEKRRRKEQSKLLSFFAKQKEEKEETNKTEDVSIEVLDNNNESDIGLTVKKKVENGNAWKQIFSERAPPLCEGHKEPCKYLTVRKPGINYGRKFWICARPVGELIKNSNAVSEEDTQPFQCRFFIWDSDWRANSKD.

A Mg(2+)-binding site is contributed by Glu-42. The active site involves Tyr-151. Residues Asp-191, Asn-193, and Asp-294 each coordinate Mg(2+). Asp-191 functions as the Proton donor/acceptor in the catalytic mechanism. The tract at residues 348–392 (MKKNKNNSPTQSENVSASASSGSSPTVSRANSVIDVDAYPPEKRR) is disordered. Residues 353–362 (NNSPTQSENV) are compositionally biased toward polar residues. Residues Cys-458, His-461, Cys-484, and Cys-508 each coordinate Zn(2+). The GRF-type zinc-finger motif lies at 458-517 (CEGHKEPCKYLTVRKPGINYGRKFWICARPVGELIKNSNAVSEEDTQPFQCRFFIWDSDW).

Belongs to the DNA repair enzymes AP/ExoA family. Mg(2+) serves as cofactor. It depends on Mn(2+) as a cofactor.

The protein resides in the nucleus. The enzyme catalyses Exonucleolytic cleavage in the 3'- to 5'-direction to yield nucleoside 5'-phosphates.. Functionally, DNA repair enzyme that cleaves apurinic/apyrimidinic (AP) sites and removes 3'-blocking groups present at single strand breaks of damaged DNA. Provides the majority of the AP-endonuclease (APE) activity. Repairs phleomycin D1-induced DNA damage. Plays a role in oxidative damage repair. This is DNA-(apurinic or apyrimidinic site) endonuclease 2 (apn2) from Schizosaccharomyces pombe (strain 972 / ATCC 24843) (Fission yeast).